The following is a 332-amino-acid chain: Holliday junction branch migration complex subunit RuvB (332 aa).

The interval 1–181 (MARILDNNVM…FGITGHMEYY (181 aa)) is large ATPase domain (RuvB-L). ATP-binding positions include Leu20, Arg21, Gly62, Lys65, Thr66, Thr67, 128–130 (EDF), Arg171, Tyr181, and Arg218. Residue Thr66 coordinates Mg(2+). A small ATPAse domain (RuvB-S) region spans residues 182-252 (QEKDLTEIVE…ITDRALTMLD (71 aa)). Positions 255 to 332 (REGLDYIDQK…RHLGYPYQNT (78 aa)) are head domain (RuvB-H). Positions 291, 310, 312, and 315 each coordinate DNA.

It belongs to the RuvB family. Homohexamer. Forms an RuvA(8)-RuvB(12)-Holliday junction (HJ) complex. HJ DNA is sandwiched between 2 RuvA tetramers; dsDNA enters through RuvA and exits via RuvB. An RuvB hexamer assembles on each DNA strand where it exits the tetramer. Each RuvB hexamer is contacted by two RuvA subunits (via domain III) on 2 adjacent RuvB subunits; this complex drives branch migration. In the full resolvosome a probable DNA-RuvA(4)-RuvB(12)-RuvC(2) complex forms which resolves the HJ.

It is found in the cytoplasm. It catalyses the reaction ATP + H2O = ADP + phosphate + H(+). Functionally, the RuvA-RuvB-RuvC complex processes Holliday junction (HJ) DNA during genetic recombination and DNA repair, while the RuvA-RuvB complex plays an important role in the rescue of blocked DNA replication forks via replication fork reversal (RFR). RuvA specifically binds to HJ cruciform DNA, conferring on it an open structure. The RuvB hexamer acts as an ATP-dependent pump, pulling dsDNA into and through the RuvAB complex. RuvB forms 2 homohexamers on either side of HJ DNA bound by 1 or 2 RuvA tetramers; 4 subunits per hexamer contact DNA at a time. Coordinated motions by a converter formed by DNA-disengaged RuvB subunits stimulates ATP hydrolysis and nucleotide exchange. Immobilization of the converter enables RuvB to convert the ATP-contained energy into a lever motion, pulling 2 nucleotides of DNA out of the RuvA tetramer per ATP hydrolyzed, thus driving DNA branch migration. The RuvB motors rotate together with the DNA substrate, which together with the progressing nucleotide cycle form the mechanistic basis for DNA recombination by continuous HJ branch migration. Branch migration allows RuvC to scan DNA until it finds its consensus sequence, where it cleaves and resolves cruciform DNA. This Streptococcus pyogenes serotype M1 protein is Holliday junction branch migration complex subunit RuvB.